The sequence spans 533 residues: MQNPSTVTQESAAPVFDFFPRLRGLTSRNRSPCSNSDGYALSSSNALYFNGFRTLPSRRMGKTLASLSFNTKSSAGSSLRRFISDFNSFIRFHCDKVVPESFASVGGVGLSSDENGIRENGTGGVLGEEGLPLNGVEADRPKKVLILMSDTGGGHRASAEAIRAAFNQEFGDEYQVFITDLWTDHTPWPFNQLPRSYNFLVKHGTLWKMTYYGTSPRIVHQSNFAATSTFIAREIAQGLMKYQPDIIISVHPLMQHVPLRVLRSKGLLKKIVFTTVITDLSTCHPTWFHKLVTRCYCPSTEVAKRAQKAGLETSQIKVYGLPVRPSFVKPVRPKVELRRELGMDENLPAVLLMGGGEGMGPIEATARALADALYDKNLGEAVGQVLIICGRNKKLQSKLSSLDWKIPVQVKGFITKMEECMGACDCIITKAGPGTIAEAMIRGLPIILNGYIAGQEAGNVPYVVENGCGKFSKSPKEISKIVADWFGPASKELEIMSQNALRLAKPEAVFKIVHDMHELVRKKNSLPQLSCTA.

The a 1,2-diacyl-sn-glycero-3-phospho-(1'-sn-glycerol) site is built by H155 and P189. UDP is bound at residue H155. The tract at residues 192–215 (QLPRSYNFLVKHGTLWKMTYYGTS) is required for binding to diacyl glycerol. UDP is bound by residues R324, F413, I414, 434-438 (GTIAE), and E456.

This sequence belongs to the glycosyltransferase 28 family. Homodimer. As to expression, expressed in roots, stems, leaves, flowers, siliques and seeds.

It localises to the plastid. Its subcellular location is the chloroplast inner membrane. The enzyme catalyses a 1,2-diacyl-sn-glycerol + UDP-alpha-D-galactose = a 1,2-diacyl-3-O-(beta-D-galactosyl)-sn-glycerol + UDP + H(+). The catalysed reaction is 1,2-di-(9Z,12Z-octadecadienoyl)-sn-glycerol + UDP-alpha-D-galactose = 1,2-di-(9Z,12Z-octadecadienoyl)-3-beta-D-galactosyl-sn-glycerol + UDP + H(+). It carries out the reaction 1-(9Z-octadecenoyl)-2-hexadecanoyl-sn-glycerol + UDP-alpha-D-galactose = 1-(9Z-octadecenoyl)-2-hexadecanoyl-3-beta-D-galactosyl-sn-glycerol + UDP + H(+). It catalyses the reaction 1,2-di-(9Z-octadecenoyl)-sn-glycerol + UDP-alpha-D-galactose = 1,2-di-(9Z-octadecenoyl)-3-beta-D-galactosyl-sn-glycerol + UDP + H(+). Its activity is regulated as follows. Activated by phosphatidate (PA) and phosphatidylglycerol (PG). Inhibited by galvestine-1. Functionally, involved in the synthesis of the major structural component of photosynthetic membranes. Required for proper thylakoid membrane biogenesis. Does not discriminate between prokaryotic (18:1/16:0) or eukaryotic (18:2/18:2) 1,2-diacylglycerol species, but operates with some preference for the prokaryotic one. Is responsible for most galactolipid synthesis in chloroplasts. Required for the formation of thylakoid membranes and functional photosynthetic electron transport during cotyledons greening in young seedlings. May link galactolipid synthesis with the coordinated transcriptional regulation of chloroplasts and other organelles during cotyledon greening. In Arabidopsis thaliana (Mouse-ear cress), this protein is Monogalactosyldiacylglycerol synthase 1, chloroplastic.